We begin with the raw amino-acid sequence, 156 residues long: Small ribosomal subunit protein uS7 (156 aa).

This sequence belongs to the universal ribosomal protein uS7 family. Part of the 30S ribosomal subunit. Contacts proteins S9 and S11.

In terms of biological role, one of the primary rRNA binding proteins, it binds directly to 16S rRNA where it nucleates assembly of the head domain of the 30S subunit. Is located at the subunit interface close to the decoding center, probably blocks exit of the E-site tRNA. The sequence is that of Small ribosomal subunit protein uS7 from Brucella melitensis biotype 1 (strain ATCC 23456 / CCUG 17765 / NCTC 10094 / 16M).